We begin with the raw amino-acid sequence, 178 residues long: Interleukin-10 (178 aa).

The first 18 residues, 1 to 18 (MHSSALLCYLVFLAGVGA), serve as a signal peptide directing secretion. Intrachain disulfides connect cysteine 30-cysteine 126 and cysteine 80-cysteine 132. Residue asparagine 67 is glycosylated (N-linked (GlcNAc...) asparagine). Asparagine 134 is a glycosylation site (N-linked (GlcNAc...) asparagine).

It belongs to the IL-10 family. In terms of assembly, homodimer. Interacts with IL10RA and IL10RB.

It is found in the secreted. Functionally, major immune regulatory cytokine that acts on many cells of the immune system where it has profound anti-inflammatory functions, limiting excessive tissue disruption caused by inflammation. Mechanistically, IL10 binds to its heterotetrameric receptor comprising IL10RA and IL10RB leading to JAK1 and STAT2-mediated phosphorylation of STAT3. In turn, STAT3 translocates to the nucleus where it drives expression of anti-inflammatory mediators. Targets antigen-presenting cells (APCs) such as macrophages and monocytes and inhibits their release of pro-inflammatory cytokines including granulocyte-macrophage colony-stimulating factor /GM-CSF, granulocyte colony-stimulating factor/G-CSF, IL-1 alpha, IL-1 beta, IL-6, IL-8 and TNF-alpha. Also interferes with antigen presentation by reducing the expression of MHC-class II and co-stimulatory molecules, thereby inhibiting their ability to induce T cell activation. In addition, controls the inflammatory response of macrophages by reprogramming essential metabolic pathways including mTOR signaling. The polypeptide is Interleukin-10 (IL10) (Equus caballus (Horse)).